A 328-amino-acid chain; its full sequence is Phosphate acyltransferase (328 aa).

Belongs to the PlsX family. In terms of assembly, homodimer. Probably interacts with PlsY.

The protein localises to the cytoplasm. The catalysed reaction is a fatty acyl-[ACP] + phosphate = an acyl phosphate + holo-[ACP]. Its pathway is lipid metabolism; phospholipid metabolism. Its function is as follows. Catalyzes the reversible formation of acyl-phosphate (acyl-PO(4)) from acyl-[acyl-carrier-protein] (acyl-ACP). This enzyme utilizes acyl-ACP as fatty acyl donor, but not acyl-CoA. The sequence is that of Phosphate acyltransferase from Staphylococcus aureus (strain MSSA476).